The sequence spans 388 residues: P2X purinoceptor 4 (388 aa).

Residues 1–33 (MAGCCSVLGSFLFEYDTPRIVLIRSRKVGLMNR) lie on the Cytoplasmic side of the membrane. The helical transmembrane segment at 34 to 54 (AVQLLILAYVIGWVFVWEKGY) threads the bilayer. Over 55–338 (QETDSVVSSV…KFDIIPTMIN (284 aa)) the chain is Extracellular. ATP-binding residues include Lys-67 and Lys-69. 2 residues coordinate CTP: Lys-67 and Lys-69. N-linked (GlcNAc...) asparagine glycosylation is found at Asn-75 and Asn-110. 3 cysteine pairs are disulfide-bonded: Cys-116–Cys-165, Cys-126–Cys-149, and Cys-132–Cys-159. 2 N-linked (GlcNAc...) asparagine glycosylation sites follow: Asn-153 and Asn-184. Positions 186 and 188 each coordinate ATP. Position 186 (Thr-186) interacts with CTP. Asn-199 and Asn-208 each carry an N-linked (GlcNAc...) asparagine glycan. Intrachain disulfides connect Cys-217-Cys-227 and Cys-261-Cys-270. Residues Asn-293, Arg-295, and Lys-313 each contribute to the ATP site. 3 residues coordinate CTP: Asn-293, Arg-295, and Lys-313. The helical transmembrane segment at 339–359 (VGSGLALLGVATVLCDVIVLY) threads the bilayer. Over 360–388 (CMKKKYYYRDKKYKYVEDYEQGLSGEMNQ) the chain is Cytoplasmic.

The protein belongs to the P2X receptor family. As to quaternary structure, functional P2RXs are organized as homomeric and heteromeric trimers. Forms heterotrimer with P2RX1. Interacts with P2RX7 (via C-terminus); this interaction is functional only in the presence of ATP. Forms heterotrimer with P2RX4; functional differences between homomeric P2RX4 and P2RX4/6 heterotrimer are minor. Interacts with AP1M2. Widespread distribution in the brain. Strongly expressed in microglial cells. Also expressed in epithelial cells.

The protein localises to the cell membrane. Its subcellular location is the lysosome membrane. It carries out the reaction K(+)(in) = K(+)(out). It catalyses the reaction Na(+)(in) = Na(+)(out). The enzyme catalyses Ca(2+)(in) = Ca(2+)(out). With respect to regulation, activated by ATP. pH-dependent and inhibited by acidic pH. In terms of biological role, ATP-gated nonselective transmembrane cation channel permeable to potassium, sodium and calcium. CTP, but not GTP or UTP, functions as a weak affinity agonist for P2RX4. Activated by extracellularly released ATP, it plays multiple role in immunity and central nervous system physiology. Plays a key role in initial steps of T-cell activation and Ca(2+) microdomain formation. Also participates in basal T-cell activity without TCR/CD3 stimulation. Promotes the differentiation and activation of Th17 cells via expression of retinoic acid-related orphan receptor C/RORC. Upon activation, drives microglia motility via the PI3K/Akt pathway. Could also function as an ATP-gated cation channel of lysosomal membranes. The protein is P2X purinoceptor 4 (P2rx4) of Rattus norvegicus (Rat).